The primary structure comprises 223 residues: DNA mismatch repair protein MutH (223 aa).

This sequence belongs to the MutH family.

The protein resides in the cytoplasm. Its function is as follows. Sequence-specific endonuclease that cleaves unmethylated GATC sequences. It is involved in DNA mismatch repair. The sequence is that of DNA mismatch repair protein MutH from Shewanella sp. (strain ANA-3).